The chain runs to 383 residues: MNELEFVTKHRRHLHQHPELSLHEFETTAYIKAFLDSLNIKYDCPLETGVIAYLEGNGSHTIAYRADIDALPILEENDVPYRSQSDHVMHACGHDGHTTALMLFVQRCKDMQDAGQLPQNVVFIFQPAEETGGGANRLIKAGAFDKYPIEAVFGIHVNPFADEGIAVIRDEEITASATEYRFFLTGLSSHVADKEQGHSCGEALQHVLTQISQIQQFHLNGLKRNIVHIGHFKAGEAINTVPSNGYLEGTIRTYDIDDLTIVKNQMHKIAESVKLLFNVDCEVKFAEGYPPTINSPKLRTQIEDALIKADLNVYDKPTPFLFGEDFSFYGQQLAPAYFVFIGTRNEDKGFVTGLHTSHLNFDEKVLINVVNFYENLLNNYKEV.

Belongs to the peptidase M20 family.

This is an uncharacterized protein from Staphylococcus aureus (strain USA300).